Here is a 315-residue protein sequence, read N- to C-terminus: MRANAGRAPVFKPGELNVYSAPRDVGEVSRALRHTGRRVMLVPTMGALHEGHLALVRAAKRTPGAVVVVSIFVNPLQFGAGEDLDAYPRTLDQDLAKLRAEGVEIAFTPTAASMYPNGLRTTVQPGPMAAELEGGSRPTHFAGVLTVVLKLLQIVAPDRAFFGEKDYQQLVLIRQMVADLNVNVQVIGVPIVREHDGLAMSSRNRYLDPAQREAAIALSAALTAGAHAATAGVQAALDAARGVLEAVPGIVVDYVELRDGELGPVSPSGSGRLLVAVRFGTTRLLDNVAIEIESIAGTDGQPVGPDGRVQSPWRN.

45–52 is an ATP binding site; it reads MGALHEGH. Residue histidine 52 is the Proton donor of the active site. Glutamine 77 is a binding site for (R)-pantoate. Position 77 (glutamine 77) interacts with beta-alanine. Residue 163–166 coordinates ATP; the sequence is GEKD. (R)-pantoate is bound at residue glutamine 169. Residues valine 192 and 200–203 contribute to the ATP site; that span reads MSSR.

It belongs to the pantothenate synthetase family. Homodimer.

It localises to the cytoplasm. It carries out the reaction (R)-pantoate + beta-alanine + ATP = (R)-pantothenate + AMP + diphosphate + H(+). Its pathway is cofactor biosynthesis; (R)-pantothenate biosynthesis; (R)-pantothenate from (R)-pantoate and beta-alanine: step 1/1. Functionally, catalyzes the condensation of pantoate with beta-alanine in an ATP-dependent reaction via a pantoyl-adenylate intermediate. This Mycobacterium ulcerans (strain Agy99) protein is Pantothenate synthetase.